The following is a 629-amino-acid chain: Ras GTPase-activating protein gap-1 (629 aa).

Residues 183–398 form the Ras-GAP domain; the sequence is DRIRPVLSSL…SVMASFLDNI (216 aa). In terms of domain architecture, PH spans 411–507; the sequence is TVFKFGNLQQ…WLNAIERQRN (97 aa).

Its subcellular location is the cytoplasm. Functionally, GTPase-activating protein, which inhibits the vulval induction by acting as a negative regulator for the member of the Ras family let-60. Probably decreases the signaling activity of Ras by stimulating its intrinsic GTPase activity, thereby lowering the levels of GTP-bound, active Ras. The polypeptide is Ras GTPase-activating protein gap-1 (gap-1) (Caenorhabditis elegans).